We begin with the raw amino-acid sequence, 1145 residues long: DNA mismatch repair protein msh-3 (1145 aa).

2 disordered regions span residues Met-1–Thr-183 and Ser-857–Leu-879. Residues Ala-13–Asn-33 are compositionally biased toward polar residues. A compositionally biased stretch (basic and acidic residues) spans Ala-121 to Arg-131. A compositionally biased stretch (acidic residues) spans Gly-158–Glu-169. The interval Thr-183–Gly-307 is mispair-binding domain. ATP is bound at residue Gly-882–Ser-889. A disordered region spans residues Lys-1030 to Lys-1056. Over residues Asp-1036 to Gly-1048 the composition is skewed to acidic residues.

It belongs to the DNA mismatch repair MutS family. MSH3 subfamily. Heterodimer consisting of msh-2-msh-3 (MutS beta). Forms a ternary complex with MutL alpha (mlh-1-pms-1).

It is found in the nucleus. In terms of biological role, component of the post-replicative DNA mismatch repair system (MMR). Heterodimerizes with msh-2 to form MutS beta, which binds to DNA mismatches thereby initiating DNA repair. Msh-3 provides substrate-binding and substrate specificity to the complex. When bound, the MutS beta heterodimer bends the DNA helix and shields approximately 20 base pairs. Acts mainly to repair insertion-deletion loops (IDLs) from 2 to 13 nucleotides in size, but can also repair base-base and single insertion-deletion mismatches that occur during replication. After mismatch binding, forms a ternary complex with the MutL alpha heterodimer, which is thought to be responsible for directing the downstream MMR events, including strand discrimination, excision, and resynthesis. ATP binding and hydrolysis play a pivotal role in mismatch repair functions. This is DNA mismatch repair protein msh-3 (msh-3) from Neurospora crassa (strain ATCC 24698 / 74-OR23-1A / CBS 708.71 / DSM 1257 / FGSC 987).